Here is a 602-residue protein sequence, read N- to C-terminus: MLRTHLAGSLRAEQAQQTVTLTGWVARRRDHGGVIFIDLRDASGVSQVVFREGAAAEQAHRLRAEYCVKVTGVVEVRPEGNQNFEIPTGAIEVNVTELEVLNESAPLPFQLDDQAGEEARLKYRYLDLRREGPGHAIRLRSKVNAAARAVLAHHEFVEVETPTLTRSTPEGARDFLVPARLQPGSFYALPQSPQLFKQLLMVGGIERYYQIARCYRDEDFRADRQPEFTQLDIEMSFVNQDDVILLAEEVLTSLWKLVGHEIKTPIARMTYAEAMRRYGSDKPDLRFGVELVECAEFFTDTTFRVFQQEYVGAVVMPGGASQPRKQLDAWQEWAKQRGAKGLAYVLVGEDGTLGGPVAKNLTDAERDGLAAHVGAKPGDCIFFAAGATKSSRALLGAARGEIARKQNLIDPDAWAFVWIVDAPLFEPTADATASGDVALGYSAWTAVHHAFTSPKPESIDTFDTDPGSALAYAYDIVCNGNEIGGGSIRIHRKDIQERVFKVMGISHEEAEEKFGFLLDAFAFGAPPHGGIAFGWDRITALLAGVDSIREVIAFPKSGGGVDPLTSAPAPITAQQRKESGVDAKPEPKGDAAAAKPQVSAEK.

Glu170 is an L-aspartate binding site. The tract at residues 194–197 is aspartate; sequence QLFK. Arg216 contacts L-aspartate. ATP is bound by residues 216-218 and Gln225; that span reads RDE. His448 is a binding site for L-aspartate. Glu482 lines the ATP pocket. Arg489 lines the L-aspartate pocket. An ATP-binding site is contributed by 534 to 537; sequence GWDR. Residues 559–602 form a disordered region; the sequence is GGVDPLTSAPAPITAQQRKESGVDAKPEPKGDAAAAKPQVSAEK. Residues 575–589 are compositionally biased toward basic and acidic residues; it reads QRKESGVDAKPEPKG.

This sequence belongs to the class-II aminoacyl-tRNA synthetase family. Type 1 subfamily. Homodimer.

It localises to the cytoplasm. The catalysed reaction is tRNA(Asx) + L-aspartate + ATP = L-aspartyl-tRNA(Asx) + AMP + diphosphate. Functionally, aspartyl-tRNA synthetase with relaxed tRNA specificity since it is able to aspartylate not only its cognate tRNA(Asp) but also tRNA(Asn). Reaction proceeds in two steps: L-aspartate is first activated by ATP to form Asp-AMP and then transferred to the acceptor end of tRNA(Asp/Asn). The chain is Aspartate--tRNA(Asp/Asn) ligase from Rhodococcus opacus (strain B4).